A 264-amino-acid chain; its full sequence is Glutamate racemase (264 aa).

Residues 10-11 (DS) and 42-43 (YG) each bind substrate. Residue Cys73 is the Proton donor/acceptor of the active site. Position 74–75 (74–75 (NT)) interacts with substrate. Cys183 serves as the catalytic Proton donor/acceptor. Residue 184-185 (TH) participates in substrate binding.

Belongs to the aspartate/glutamate racemases family.

It catalyses the reaction L-glutamate = D-glutamate. Its pathway is cell wall biogenesis; peptidoglycan biosynthesis. In terms of biological role, provides the (R)-glutamate required for cell wall biosynthesis. This chain is Glutamate racemase, found in Streptococcus sanguinis (strain SK36).